The primary structure comprises 347 residues: Monopolin complex subunit LRS4 (347 aa).

Residues 46 to 118 (KKVVDETLFL…QISVDKHNKE (73 aa)) adopt a coiled-coil conformation. Basic and acidic residues predominate over residues 112-130 (VDKHNKERTPSTGRDEQQR). 2 disordered regions span residues 112 to 183 (VDKH…SLLS) and 208 to 230 (RNDTTSSKIAGKSPSRLSALQKS). Polar residues-rich tracts occupy residues 131-140 (NSKAAHTSKP) and 155-172 (NNQTNDRGGNDPDSPTSQ). Serine 168 and serine 230 each carry phosphoserine.

As to quaternary structure, component of the monopolin complex composed of at least CSM1, LRS4 and MAM1. The complex associates with the kinetochore. Post-translationally, phosphorylated by CDC5. This phosphorylation is required for the location to the kinetochores during late pachytene.

Its subcellular location is the nucleus. The protein localises to the nucleolus. It is found in the chromosome. The protein resides in the centromere. Functionally, component of the monopolin complex which promotes monoorientation during meiosis I, required for chromosome segregation during meiosis. Involved in rDNA silencing. The sequence is that of Monopolin complex subunit LRS4 (LRS4) from Saccharomyces cerevisiae (strain ATCC 204508 / S288c) (Baker's yeast).